A 321-amino-acid chain; its full sequence is Peroxidase 70 (321 aa).

Residues 1–25 form the signal peptide; that stretch reads MASSSFTSLSVMVLLCLAAAAVASA. Pyrrolidone carboxylic acid is present on Gln26. 4 cysteine pairs are disulfide-bonded: Cys36-Cys116, Cys69-Cys74, Cys122-Cys317, and Cys201-Cys226. The Proton acceptor role is filled by His67. Ca(2+)-binding residues include Asp68, Val71, Gly73, Asp75, and Ser77. An N-linked (GlcNAc...) asparagine glycan is attached at Asn81. Residue Pro164 participates in substrate binding. N-linked (GlcNAc...) asparagine glycosylation is present at Asn172. Heme b is bound at residue His194. Thr195 contributes to the Ca(2+) binding site. N-linked (GlcNAc...) asparagine glycosylation occurs at Asn210. Residues Asp241, Thr244, and Asp249 each contribute to the Ca(2+) site.

This sequence belongs to the peroxidase family. Classical plant (class III) peroxidase subfamily. Heme b is required as a cofactor. Ca(2+) serves as cofactor.

Its subcellular location is the secreted. The enzyme catalyses 2 a phenolic donor + H2O2 = 2 a phenolic radical donor + 2 H2O. In terms of biological role, removal of H(2)O(2), oxidation of toxic reductants, biosynthesis and degradation of lignin, suberization, auxin catabolism, response to environmental stresses such as wounding, pathogen attack and oxidative stress. These functions might be dependent on each isozyme/isoform in each plant tissue. This Zea mays (Maize) protein is Peroxidase 70 (PER70).